We begin with the raw amino-acid sequence, 386 residues long: Convicilin (386 aa).

The signal sequence occupies residues 1–29 (MATTIKSRFPLLLLLGIIFLASVVSVTYA). The segment at 33-199 (EGSEPRVPAQ…EERSSESQER (167 aa)) is disordered. Basic and acidic residues-rich tracts occupy residues 41–65 (AQRERGRQEGEKEEKRHGEWRPSYE), 74–91 (QRERGRQEGEKEEKRHGE), 104–144 (EKQK…RWER), and 153–186 (EEWRGSQRREDPEERARLRHREERTKRDRRHQRE). Residues 202–359 (PFLFKSNKFL…SYNTRYETIE (158 aa)) form the Cupin type-1 domain. Positions 367 to 386 (EKDRKRRQQGEETDAIVKVS) are disordered.

This sequence belongs to the 7S seed storage protein family.

The protein resides in the vacuole. It localises to the aleurone grain. In terms of biological role, seed storage protein. The sequence is that of Convicilin (CVCB) from Pisum sativum (Garden pea).